The chain runs to 446 residues: Methionine aminopeptidase 2 (446 aa).

Positions 1 to 91 (MAAQVTDALK…PPRVLLSNLF (91 aa)) are disordered. A compositionally biased stretch (acidic residues) spans 36–48 (EAEDSDDEEEEPV). Basic residues predominate over residues 59–72 (KKKRKRKKKPKKKA). His-199 contributes to the substrate binding site. Residues Asp-219, Asp-230, and His-299 each coordinate a divalent metal cation. His-307 lines the substrate pocket. Positions 332 and 427 each coordinate a divalent metal cation.

It belongs to the peptidase M24A family. Methionine aminopeptidase eukaryotic type 2 subfamily. Co(2+) serves as cofactor. It depends on Zn(2+) as a cofactor. The cofactor is Mn(2+). Requires Fe(2+) as cofactor.

It is found in the cytoplasm. The catalysed reaction is Release of N-terminal amino acids, preferentially methionine, from peptides and arylamides.. In terms of biological role, cotranslationally removes the N-terminal methionine from nascent proteins. The N-terminal methionine is often cleaved when the second residue in the primary sequence is small and uncharged (Met-Ala-, Cys, Gly, Pro, Ser, Thr, or Val). This chain is Methionine aminopeptidase 2, found in Sclerotinia sclerotiorum (strain ATCC 18683 / 1980 / Ss-1) (White mold).